We begin with the raw amino-acid sequence, 412 residues long: Transcription factor NIGT1 (412 aa).

Disordered regions lie at residues 54–241 (MDAA…RCWA), 286–310 (KYRL…PAPP), and 358–412 (AMLP…TTSA). A compositionally biased stretch (basic and acidic residues) spans 90-112 (ESTHADAAKSGKKEEAETSERHS). A compositionally biased stretch (low complexity) spans 183 to 193 (ASSTTAAASST). Positions 198–228 (SGDKPTDDDTEKHMETDKDNDKDAKDKDKEG) are enriched in basic and acidic residues. Residues 232–292 (PHRKPRRCWA…HLQKYRLHTR (61 aa)) form the HTH myb-type domain. Residues 263–288 (PKQIRELMKVDGLTNDEVKSHLQKYR) constitute a DNA-binding region (H-T-H motif). The segment covering 383 to 392 (SGSEGRRSGD) has biased composition (basic and acidic residues). Over residues 395 to 412 (DGSSSSPAVSSSSQTTSA) the composition is skewed to low complexity.

Its subcellular location is the nucleus. Functionally, transcriptional repressor that may play a role in response to nitrogen. May be involved in a time-dependent signaling for transcriptional regulation of nitrate-responsive genes. Binds specifically to the DNA sequence motif 5'-GAATC-3' or 5'-GAATATTC-3'. Represses the activity of its own promoter trough binding to these motifs. The polypeptide is Transcription factor NIGT1 (Oryza sativa subsp. japonica (Rice)).